Reading from the N-terminus, the 130-residue chain is Protachykinin-1 (130 aa).

The N-terminal stretch at 1-19 (MKILVAVAVFFLVSTQLSA) is a signal peptide. Residues 20–56 (EEIGANDDLNYWSDWSDSDQIKEALPEPFEHILQRIA) constitute a propeptide that is removed on maturation. Met68 and Met107 each carry methionine amide.

This sequence belongs to the tachykinin family. Post-translationally, the substance P form is cleaved at Pro-59 by the prolyl endopeptidase FAP (seprase) activity (in vitro). Substance P is also cleaved and degraded by Angiotensin-converting enzyme (ACE) and neprilysin (MME).

The protein resides in the secreted. Functionally, tachykinins are active peptides which excite neurons, evoke behavioral responses, are potent vasodilators and secretagogues, and contract (directly or indirectly) many smooth muscles. The chain is Protachykinin-1 (TAC1) from Mesocricetus auratus (Golden hamster).